The following is a 99-amino-acid chain: Nucleoid-associated protein EbfC (99 aa).

It belongs to the YbaB/EbfC family. Homodimer.

The protein resides in the cytoplasm. It is found in the nucleoid. Binds to DNA and alters its conformation. May be involved in regulation of gene expression, nucleoid organization and DNA protection. This Borrelia hermsii (strain HS1 / DAH) protein is Nucleoid-associated protein EbfC.